Reading from the N-terminus, the 349-residue chain is Ion-translocating oxidoreductase complex subunit D (349 aa).

Transmembrane regions (helical) follow at residues 37–57 (AFFG…ALSA), 73–90 (LSDN…VAIP), and 124–144 (AMAA…TWIA). Thr185 is subject to FMN phosphoryl threonine. Helical transmembrane passes span 212–232 (ATGV…LVLL), 239–259 (WHIS…GFLL), 265–285 (GSPL…FIAT), 291–311 (ATSP…VYII), and 315–335 (GGYP…APFI).

Belongs to the NqrB/RnfD family. The complex is composed of six subunits: RnfA, RnfB, RnfC, RnfD, RnfE and RnfG. FMN serves as cofactor.

It is found in the cell inner membrane. Functionally, part of a membrane-bound complex that couples electron transfer with translocation of ions across the membrane. This chain is Ion-translocating oxidoreductase complex subunit D, found in Shewanella sp. (strain W3-18-1).